The sequence spans 208 residues: Histone 24 (208 aa).

Ser2 carries the post-translational modification N-acetylserine. Residue Lys14 is modified to N6-methyllysine. The region spanning 37-113 (AHPPYINMIK…GANGRFRVPE (77 aa)) is the H15 domain. A disordered region spans residues 101-208 (AGSGANGRFR…KKAAKPAAKA (108 aa)). Residues 114–138 (KAAAAKKPAAAKKPAAAKKPAAAKK) show a composition bias toward low complexity. Basic residues-rich tracts occupy residues 144–155 (KAKKPAAAKPKK) and 162–202 (KVKK…KKAA).

It belongs to the histone H1/H5 family. In terms of assembly, interacts with nmad-1. Interacts (when monomethylated at Lys-14) with chromobox protein homolog hpl-1; the interaction is direct. Interacts (when monomethylated at Lys-14) with histone H3 (when trimethylated on 'Lys-27'); the interaction is direct. Methylation at lysine 14 is necessary to regulate male tail development.

It localises to the nucleus. It is found in the chromosome. The protein resides in the cytoplasm. In terms of biological role, histones H1 are necessary for the condensation of nucleosome chains into higher-order structures. Probably does not act as global transcriptional repressor. Acting in concert with chromobox protein homologs hpl-1 and hpl-2, involved in reproduction, somatic gonad development, male tail development, and vulval cell fate decisions; perhaps as a result of modulating expression of Hox genes mab-5 and egl-5. Plays a role in linking epigenetic regulation with the innate immune response. The polypeptide is Histone 24 (Caenorhabditis elegans).